The primary structure comprises 239 residues: Purine nucleoside phosphorylase DeoD-type (239 aa).

His-5 contributes to the a purine D-ribonucleoside binding site. Phosphate-binding positions include Gly-21, Arg-25, Arg-44, and 88-91 (RVGS). A purine D-ribonucleoside is bound by residues 180–182 (EME) and 204–205 (SD). The active-site Proton donor is the Asp-205.

This sequence belongs to the PNP/UDP phosphorylase family. Homohexamer; trimer of homodimers.

It catalyses the reaction a purine D-ribonucleoside + phosphate = a purine nucleobase + alpha-D-ribose 1-phosphate. It carries out the reaction a purine 2'-deoxy-D-ribonucleoside + phosphate = a purine nucleobase + 2-deoxy-alpha-D-ribose 1-phosphate. In terms of biological role, catalyzes the reversible phosphorolytic breakdown of the N-glycosidic bond in the beta-(deoxy)ribonucleoside molecules, with the formation of the corresponding free purine bases and pentose-1-phosphate. In Yersinia pseudotuberculosis serotype O:1b (strain IP 31758), this protein is Purine nucleoside phosphorylase DeoD-type.